The chain runs to 72 residues: Gene 35 protein (72 aa).

The protein is Gene 35 protein (35) of Mycobacterium phage L5 (Mycobacteriophage L5).